We begin with the raw amino-acid sequence, 601 residues long: Elongation factor 4 (601 aa).

The 183-residue stretch at 6-188 folds into the tr-type G domain; that stretch reads SHIRNFSIIA…QIVHRVPPPE (183 aa). GTP contacts are provided by residues 18-23 and 135-138; these read DHGKST and NKID.

Belongs to the TRAFAC class translation factor GTPase superfamily. Classic translation factor GTPase family. LepA subfamily.

It is found in the cell inner membrane. It catalyses the reaction GTP + H2O = GDP + phosphate + H(+). Required for accurate and efficient protein synthesis under certain stress conditions. May act as a fidelity factor of the translation reaction, by catalyzing a one-codon backward translocation of tRNAs on improperly translocated ribosomes. Back-translocation proceeds from a post-translocation (POST) complex to a pre-translocation (PRE) complex, thus giving elongation factor G a second chance to translocate the tRNAs correctly. Binds to ribosomes in a GTP-dependent manner. This is Elongation factor 4 from Anaeromyxobacter dehalogenans (strain 2CP-C).